Here is a 206-residue protein sequence, read N- to C-terminus: Ribosomal RNA small subunit methyltransferase G (206 aa).

S-adenosyl-L-methionine is bound by residues G73, L78, 124-125 (VE), and R139.

The protein belongs to the methyltransferase superfamily. RNA methyltransferase RsmG family.

It is found in the cytoplasm. The catalysed reaction is guanosine(527) in 16S rRNA + S-adenosyl-L-methionine = N(7)-methylguanosine(527) in 16S rRNA + S-adenosyl-L-homocysteine. Functionally, specifically methylates the N7 position of guanine in position 527 of 16S rRNA. This is Ribosomal RNA small subunit methyltransferase G from Photorhabdus laumondii subsp. laumondii (strain DSM 15139 / CIP 105565 / TT01) (Photorhabdus luminescens subsp. laumondii).